The primary structure comprises 247 residues: ATP synthase subunit a, chloroplastic (247 aa).

The next 5 membrane-spanning stretches (helical) occupy residues 38–58 (QVLITSWVVIAILLGSATIAV), 95–115 (VPFIGTMFLFIFVSNWSGALL), 134–154 (INTTVALALPTSMAYFYAGFT), 199–219 (LVVVVLVSLVPSVVPIPVMFL), and 220–240 (GLFTSGIQALIFATLAAAYIG).

Belongs to the ATPase A chain family. As to quaternary structure, F-type ATPases have 2 components, CF(1) - the catalytic core - and CF(0) - the membrane proton channel. CF(1) has five subunits: alpha(3), beta(3), gamma(1), delta(1), epsilon(1). CF(0) has four main subunits: a, b, b' and c.

Its subcellular location is the plastid. The protein localises to the chloroplast thylakoid membrane. Functionally, key component of the proton channel; it plays a direct role in the translocation of protons across the membrane. This is ATP synthase subunit a, chloroplastic from Liriodendron tulipifera (Tuliptree).